Consider the following 447-residue polypeptide: Asparagine--tRNA ligase (447 aa).

Belongs to the class-II aminoacyl-tRNA synthetase family. In terms of assembly, homodimer.

It localises to the cytoplasm. The enzyme catalyses tRNA(Asn) + L-asparagine + ATP = L-asparaginyl-tRNA(Asn) + AMP + diphosphate + H(+). The protein is Asparagine--tRNA ligase of Herpetosiphon aurantiacus (strain ATCC 23779 / DSM 785 / 114-95).